We begin with the raw amino-acid sequence, 275 residues long: Monooxygenase af470 (275 aa).

The catalysed reaction is prefumagillin + NADPH + 2 O2 = fumagillin + acetaldehyde + NADP(+) + H2O. Its pathway is secondary metabolite biosynthesis; terpenoid biosynthesis. Functionally, monooxygenase; part of the gene cluster that mediates the biosynthesis of fumagillin, a meroterpenoid that has numerous biological activities including irreversible inhibition of human type 2 methionine aminopeptidase (METAP2). Within the pathway, the monooxygenase af470 catalyzes the oxidative cleavage of prefumagillin to yield the final compound of the pathway, fumagillin. The pathway begins with the conversion of farnesyl pyrophosphate (FPP) to beta-trans-bergamotene by the membrane-bound beta-trans-bergamotene synthase af520. The multifunctional cytochrome P450 monooxygenase af510 then converts beta-trans-bergamotene into 5-keto-demethoxyfumagillol via several oxydation steps. 5-keto-demethoxyfumagillol is then subjected to successive C-6 hydroxylation and O-methylation by the dioxygenase af480 and O-methyltransferase af390-400, respectively, to yield 5-keto-fumagillol, which is then stereoselectively reduced by the keto-reductase af490 to 5R-hydroxy-seco-sesquiterpene. The next step is the polyketide transferase af380-catalyzed transfer of a dodecapentaenoyl group synthesized by the polyketide synthase af370 onto 5R-hydroxy-seco-sesquiterpene which leads to the production of prefumagillin. Finally, oxidative cleavage by the monooxygenase af470 converts prefumagillin to fumagillin. This is Monooxygenase af470 from Aspergillus fumigatus (strain ATCC MYA-4609 / CBS 101355 / FGSC A1100 / Af293) (Neosartorya fumigata).